Consider the following 180-residue polypeptide: Adenine phosphoribosyltransferase (180 aa).

Ser-2 carries the N-acetylserine modification. Residues Ser-15 and Ser-30 each carry the phosphoserine modification. Tyr-60 bears the Phosphotyrosine mark. Position 66 is a phosphoserine (Ser-66). At Lys-114 the chain carries N6-acetyllysine. Residue Thr-135 is modified to Phosphothreonine.

The protein belongs to the purine/pyrimidine phosphoribosyltransferase family. As to quaternary structure, homodimer.

It localises to the cytoplasm. It catalyses the reaction AMP + diphosphate = 5-phospho-alpha-D-ribose 1-diphosphate + adenine. It functions in the pathway purine metabolism; AMP biosynthesis via salvage pathway; AMP from adenine: step 1/1. Its function is as follows. Catalyzes a salvage reaction resulting in the formation of AMP, that is energically less costly than de novo synthesis. The sequence is that of Adenine phosphoribosyltransferase from Stochomys longicaudatus (Target rat).